The sequence spans 348 residues: Dihydroorotase (348 aa).

Zn(2+)-binding residues include H14 and H16. Residues 16-18 (HLR) and N42 contribute to the substrate site. K100, H137, and H175 together coordinate Zn(2+). The residue at position 100 (K100) is an N6-carboxylysine. H137 is a binding site for substrate. Residue L220 participates in substrate binding. Zn(2+) is bound at residue D248. D248 is an active-site residue. Residues H252 and A264 each contribute to the substrate site.

This sequence belongs to the metallo-dependent hydrolases superfamily. DHOase family. Class II DHOase subfamily. Homodimer. It depends on Zn(2+) as a cofactor.

It catalyses the reaction (S)-dihydroorotate + H2O = N-carbamoyl-L-aspartate + H(+). It functions in the pathway pyrimidine metabolism; UMP biosynthesis via de novo pathway; (S)-dihydroorotate from bicarbonate: step 3/3. In terms of biological role, catalyzes the reversible cyclization of carbamoyl aspartate to dihydroorotate. This is Dihydroorotase from Azotobacter vinelandii (strain DJ / ATCC BAA-1303).